The primary structure comprises 405 residues: Putative phosphate permease PYRAB14010 (405 aa).

11 helical membrane-spanning segments follow: residues Met3 to Ala23, Ala44 to Thr64, Val82 to Thr102, Ile114 to Gly134, Ser138 to Phe158, Val181 to Gly201, Gly207 to Leu227, Val264 to Gly284, Val287 to Thr307, Phe329 to Ile349, and Phe384 to Val404.

The protein belongs to the inorganic phosphate transporter (PiT) (TC 2.A.20) family.

Its subcellular location is the cell membrane. Potential transporter for phosphate. The protein is Putative phosphate permease PYRAB14010 of Pyrococcus abyssi (strain GE5 / Orsay).